Reading from the N-terminus, the 1585-residue chain is Sterol 3-beta-glucosyltransferase (1585 aa).

Over residues 1 to 18 the composition is skewed to pro residues; it reads MSPPISPTPPPLQPPFPP. Disordered stretches follow at residues 1-154, 177-225, and 249-279; these read MSPP…CDFR, PWEE…PTHT, and YQYA…LPKG. 3 stretches are compositionally biased toward polar residues: residues 65 to 77, 105 to 123, and 132 to 148; these read DQAT…SLIP, DAQT…STHE, and PRTS…QMAE. A compositionally biased stretch (acidic residues) spans 178–194; the sequence is WEEDDDSDDGEDDDEFI. Residues 255-273 are compositionally biased toward low complexity; it reads ETSSRRTSAAGSESSSEGE. The 169-residue stretch at 387-555 folds into the GRAM 1 domain; the sequence is ERLMEVFGLE…EAIVDVEKSP (169 aa). A PH domain is found at 438–530; it reads LLVKSGPLHK…WVKAIQKVMF (93 aa). Disordered stretches follow at residues 625–645 and 666–852; these read TSHA…LGMA and DGEP…GSES. Positions 670-689 are enriched in basic and acidic residues; that stretch reads LEEHSQGPHHNDEDASHLPH. Composition is skewed to polar residues over residues 760–785, 806–817, and 827–840; these read TDSS…QASV, NKPSVVDSNSAE, and SWTS…QMVK. Residues 862-933 form the GRAM 2 domain; the sequence is RKFRTFFALS…RDLYGLKAQK (72 aa). Residues S1043, R1044, D1046, I1358, H1360, H1373, G1377, T1378, D1397, and Q1398 each contribute to the UDP-alpha-D-glucose site. The interval 1499 to 1555 is disordered; that stretch reads NRVRSRSRSRSRSSQGRFSPRRHTVDDDGWSVVSGGSRSRSGSASAVTSPERRPLNI. A compositionally biased stretch (low complexity) spans 1529–1545; it reads SVVSGGSRSRSGSASAV.

The protein belongs to the glycosyltransferase 28 family.

It is found in the cytoplasm. It localises to the membrane. The enzyme catalyses a sterol + UDP-alpha-D-glucose = a sterol 3-beta-D-glucoside + UDP + H(+). It catalyses the reaction ergosterol + UDP-alpha-D-glucose = ergosteryl 3-beta-D-glucoside + UDP + H(+). In terms of biological role, sterol glycosyltransferase responsible for the glycosylation of ergosterol to form ergosterol-glucoside. This is Sterol 3-beta-glucosyltransferase from Cryptococcus neoformans var. neoformans serotype D (strain JEC21 / ATCC MYA-565) (Filobasidiella neoformans).